The sequence spans 151 residues: Tetratricopeptide repeat protein 32 (151 aa).

TPR repeat units follow at residues 8–41 (SHATLTLAQAHFNNGEYAEAEALYSAYIRRCACA), 58–91 (ATAYNNRGQIKYFRVDFYEAMDDYTSAIEVQPNF), and 92–125 (EVPYYNRGLILYRLGYFDDALEDFKKVLDLNPGF).

This is Tetratricopeptide repeat protein 32 (TTC32) from Homo sapiens (Human).